The sequence spans 1457 residues: Eye-specific diacylglycerol kinase (1457 aa).

Disordered regions lie at residues 1 to 123 (MQQQ…SSEA), 136 to 177 (RSHS…PPCI), and 207 to 339 (YSNT…QPTT). 3 stretches are compositionally biased toward low complexity: residues 22-62 (SATT…LRTT), 98-115 (SQRA…SSAS), and 141-154 (DSAT…DSGT). Residues 214-253 (ASEDEDEVEGHNAEEEEEGSAAIEDAEEETTEAATEEADE) are compositionally biased toward acidic residues. Positions 254-266 (DPRTEVESEHDHD) are enriched in basic and acidic residues. The span at 294–303 (RLPRQMRRHT) shows a compositional bias: basic residues. 2 consecutive Phorbol-ester/DAG-type zinc fingers follow at residues 591–641 (HYWK…TLAC) and 661–724 (HHWV…GEEC). Residues 758–799 (NNAASGSGGGGAGGGAGGGGGKSKKQTQRRQKGKEEKKEPRA) are disordered. The span at 763-778 (GSGGGGAGGGAGGGGG) shows a compositional bias: gly residues. The segment covering 779–789 (KSKKQTQRRQK) has biased composition (basic residues). Positions 808 to 944 (PEVIPVIVFI…MDRWRVKVTP (137 aa)) constitute a DAGKc domain. Residues 1264–1302 (TPDQERSFAAFSQRQAQNERRQMDQAQGRGPGSTDEDLQ) are disordered. 4 ANK repeats span residues 1320–1349 (QTSD…SLQS), 1353–1382 (NGQT…RRLI), 1389–1418 (LGQT…HLDT), and 1422–1451 (GGNT…TQPV).

The protein belongs to the eukaryotic diacylglycerol kinase family. Expressed specifically in adult eye.

Its subcellular location is the membrane. The catalysed reaction is a 1,2-diacyl-sn-glycerol + ATP = a 1,2-diacyl-sn-glycero-3-phosphate + ADP + H(+). Its function is as follows. Required for the maintenance of phospholipid turnover within the photoreceptor. The chain is Eye-specific diacylglycerol kinase (rdgA) from Drosophila melanogaster (Fruit fly).